A 410-amino-acid chain; its full sequence is WD repeat-containing protein jip5 (410 aa).

WD repeat units follow at residues 9-48 (PLSA…EEEH), 74-113 (RHKG…VENK), 119-160 (AKDG…SKVA), 223-264 (VSST…DQDE), 273-316 (GGGE…VVSE), and 320-357 (DETE…IGGE). The tract at residues 41–65 (PTEEEEEHSDDEQASVSSSRNGKGH) is disordered. Residues 43 to 53 (EEEEEHSDDEQ) show a composition bias toward acidic residues. The disordered stretch occupies residues 354–410 (IGGEKRGFGGDSDDSDDDSDDSDHEPKQGDDSRRKRKKQKGKDRGKGPEIMAFADLD). Residues 364–376 (DSDDSDDDSDDSD) are compositionally biased toward acidic residues. Basic and acidic residues predominate over residues 377–386 (HEPKQGDDSR).

Belongs to the WD repeat WDR55 family.

The protein localises to the nucleus. It localises to the nucleolus. This is WD repeat-containing protein jip5 (jip5) from Emericella nidulans (strain FGSC A4 / ATCC 38163 / CBS 112.46 / NRRL 194 / M139) (Aspergillus nidulans).